The chain runs to 175 residues: DELTA-stichotoxin-She4b (175 aa).

The tract at residues 1 to 10 is plays an important role in the hemolytic activity; that stretch reads ALAGTIIAGA. The segment at 9–28 is N-terminal region; the sequence is GASLTFQVLDKVLEELGKVS. Phosphocholine contacts are provided by Ser-52, Val-85, Ser-103, Pro-105, Tyr-131, Tyr-135, and Tyr-136. Positions 103–118 are trp-rich region, which is important for the binding to lipid membrane; that stretch reads SVPFDYNWYSNWWDVK. The short motif at 141 to 143 is the Cell attachment site, crucial for protein stability element; that stretch reads RGD.

Octamer or nonamer in membranes. Monomer in the soluble state. Originally described as forming tetramer in the presence of a lipidic interface. In terms of tissue distribution, expressed in tentacles and mesenteric filaments.

It localises to the secreted. The protein localises to the nematocyst. Its subcellular location is the target cell membrane. Functionally, pore-forming protein that forms cations-selective hydrophilic pores of around 1 nm and causes cardiac stimulation and cytolysis. Pore formation is a multi-step process that involves specific recognition of membrane sphingomyelin (but neither cholesterol nor phosphatidylcholine) using aromatic rich region and adjacent phosphocholine (POC) binding site, firm binding to the membrane (mainly driven by hydrophobic interactions) accompanied by the transfer of the N-terminal region to the lipid-water interface and finally pore formation after oligomerization of monomers. Cytolytic effects include red blood cells hemolysis, platelet aggregation and lysis, cytotoxic and cytostatic effects on fibroblasts. Lethality in mammals has been ascribed to severe vasospasm of coronary vessels, cardiac arrhythmia, and inotropic effects. The sequence is that of DELTA-stichotoxin-She4b from Stichodactyla helianthus (Sun anemone).